Consider the following 648-residue polypeptide: Transcription termination factor FttA (648 aa).

The tract at residues 9-76 (DDILKEIREI…ISVRPDPDIL (68 aa)) is KHa. Residues 77–144 (LPPEKAEELI…WAPRVVRTPP (68 aa)) form a KHb region. A metallo-beta-lactamase N-terminus region spans residues 185–395 (WIRITGLGGF…LVMESTYGGS (211 aa)). Zn(2+)-binding residues include His-253, His-255, Asp-257, His-258, His-341, and Asp-364. The segment at 396 to 589 (NDYQMPREEA…MEVHTIDGFS (194 aa)) is beta-Casp. The segment at 590–648 (GHADRRELMSYVARVRPRPERIITVHGEAHKCLDLSSSIHKKFGISTRAPNNLDAIRLK) is metallo-beta-lactamase C-terminus. Position 615 (His-615) interacts with Zn(2+).

The protein belongs to the metallo-beta-lactamase superfamily. RNA-metabolizing metallo-beta-lactamase-like family. FttA subfamily. In terms of assembly, homodimer. Probably interacts transiently with RNA polymerase (RNAP), (via at least the RNAP stalk subunits Rpo4 and Rpo7), interacts transiently with the Spt4-Spt5 complex. The cofactor is Zn(2+).

Transcription termination is stimulated by the Spt4-Spt5 complex. Dipicolinic acid inhibits FttA-mediated termination in vitro and inhibits growth in vivo. Functionally, terminates transcription on the whole genome. Termination is linked to FttA-mediated RNA cleavage and does not require NTP hydrolysis. Cleaves endonucleolytically at the RNA exit channel of RNA polymerase (RNAP); the 5'-3' exonuclease activity of this protein degrades the nascent RNA released from RNAP. In terms of biological role, facilitates transcription termination; addition of this factor to stalled transcription elongation complexes (TEC) promotes nascent transcript cleavage and releases RNA polymerase (RNAP) from DNA in vitro. Transcription termination competes with productive transcription elongation. Termination is stimulated by C-rich transcripts and inhibited by G-rich transcripts; the Spt4-Spt5 complex enhances termination on C-less transcripts. Yields an approximately 100 nucleotide RNA, consistent with endonucleolytic cleavage at the RNA exit channel of RNAP. This is Transcription termination factor FttA from Thermococcus kodakarensis (strain ATCC BAA-918 / JCM 12380 / KOD1) (Pyrococcus kodakaraensis (strain KOD1)).